The primary structure comprises 329 residues: Probable cell division protein WhiA (329 aa).

A DNA-binding region (H-T-H motif) is located at residues 275-308; it reads SLEELGALADPPLTKDAVAGRIRRLLAMADKRAQ.

It belongs to the WhiA family.

In terms of biological role, involved in cell division and chromosome segregation. The polypeptide is Probable cell division protein WhiA (Streptomyces avermitilis (strain ATCC 31267 / DSM 46492 / JCM 5070 / NBRC 14893 / NCIMB 12804 / NRRL 8165 / MA-4680)).